The primary structure comprises 217 residues: MLTRKQHDLLLFIHNRLSVSGISPSFEEMKLALDLKSKSGIHRLIKALEERGFIRRLPNRARALEVIRLPEDKTEIQKKISRDYTPPKADNDVIEIPLHGRIAAGLPIEALEGQSHLAVPPSYLGSGAHYALEVAGDSMVDAGIFDGDYIIVRQTDEAHEGEIVVALIDNSDATLKYFHREGRMVRLDPANRAYAPMRYDASRIGIQGRLVGLLRRY.

The H-T-H motif DNA-binding region spans F26–K46. Residues S138 and K176 each act as for autocatalytic cleavage activity in the active site.

It belongs to the peptidase S24 family. As to quaternary structure, homodimer.

The enzyme catalyses Hydrolysis of Ala-|-Gly bond in repressor LexA.. Represses a number of genes involved in the response to DNA damage (SOS response), including recA and lexA. In the presence of single-stranded DNA, RecA interacts with LexA causing an autocatalytic cleavage which disrupts the DNA-binding part of LexA, leading to derepression of the SOS regulon and eventually DNA repair. This Zymomonas mobilis subsp. mobilis (strain ATCC 31821 / ZM4 / CP4) protein is LexA repressor.